Consider the following 2100-residue polypeptide: Autophagy-related protein 2 (2100 aa).

7 disordered regions span residues 101–129 (LPDKPEQNAPPTRSKGTAEDEGQDGHSVL), 288–363 (STVH…DSDD), 410–492 (IFPK…AVSQ), 512–588 (MSAM…HNSP), 674–694 (LPISRTKPTTQKHEDFDGLND), 1474–1499 (PSHGDSGPQGRGATTPRFGNEGSASA), and 1969–1996 (DFLNSPRGSPSRPSTSDGRWDDNGVDEG). The segment covering 300–320 (RPRSPQPSSSGSDSCGDMSRS) has biased composition (low complexity). A compositionally biased stretch (basic and acidic residues) spans 335–346 (VDSHGDESRHLE). Polar residues predominate over residues 462–485 (DSATSARGKTPDCQTEQESPSTSK). The segment covering 512–522 (MSAMSQSSTTS) has biased composition (low complexity). Basic and acidic residues-rich tracts occupy residues 535 to 546 (KRIDTSDPDQKE) and 555 to 565 (TEAKGASHDFD). The segment covering 1973-1985 (SPRGSPSRPSTSD) has biased composition (low complexity). Over residues 1986 to 1996 (GRWDDNGVDEG) the composition is skewed to basic and acidic residues.

It belongs to the ATG2 family.

The protein localises to the preautophagosomal structure membrane. It is found in the endoplasmic reticulum membrane. The catalysed reaction is a 1,2-diacyl-sn-glycero-3-phosphocholine(in) = a 1,2-diacyl-sn-glycero-3-phosphocholine(out). The enzyme catalyses a 1,2-diacyl-sn-glycero-3-phospho-L-serine(in) = a 1,2-diacyl-sn-glycero-3-phospho-L-serine(out). It carries out the reaction a 1,2-diacyl-sn-glycero-3-phosphoethanolamine(in) = a 1,2-diacyl-sn-glycero-3-phosphoethanolamine(out). Lipid transfer protein required for autophagosome completion and peroxisome degradation. Tethers the edge of the isolation membrane (IM) to the endoplasmic reticulum (ER) and mediates direct lipid transfer from ER to IM for IM expansion. ATG2 binds to the ER exit site (ERES), which is the membrane source for autophagosome formation, using basic residues in its N-terminal region (NR) and to the expanding edge of the IM through its C-terminal region. The latter binding is assisted by an ATG18-PtdIns3P interaction. ATG2 then extracts phospholipids from the membrane source using its NR and transfers them to ATG9 to the IM through its predicted beta-sheet-rich structure for membrane expansion. This Coccidioides immitis (strain RS) (Valley fever fungus) protein is Autophagy-related protein 2 (ATG2).